A 175-amino-acid polypeptide reads, in one-letter code: Thermoresistant gluconokinase (175 aa).

15–22 (GVSGSGKS) is an ATP binding site.

It belongs to the gluconokinase GntK/GntV family.

It catalyses the reaction D-gluconate + ATP = 6-phospho-D-gluconate + ADP + H(+). Its pathway is carbohydrate acid metabolism; D-gluconate degradation. This Escherichia coli (strain K12) protein is Thermoresistant gluconokinase (gntK).